A 1042-amino-acid chain; its full sequence is Serine/threonine-protein kinase LATS2 (1042 aa).

Positions 23-44 (REGLKQPSKASTQGLLVGPNSD) are disordered. A compositionally biased stretch (polar residues) spans 30–44 (SKASTQGLLVGPNSD). Ser82 carries the post-translational modification Phosphoserine; by AURKA. Residues 97-138 (EVNRQMLQELVNAGCDQEMAGRALKQTGSRSIEAALEYISKM) form the UBA domain. The tract at residues 100–140 (RQMLQELVNAGCDQEMAGRALKQTGSRSIEAALEYISKMGY) is interaction with ubiquitinated AMOTL2. The tract at residues 237-282 (HFPGTHYGRGHLLSEQPGYGVQRSSSFQNKTPPDAYSSMAKAQGGP) is disordered. Polar residues predominate over residues 258–267 (QRSSSFQNKT). Thr267 carries the post-translational modification Phosphothreonine. The residue at position 362 (Ser362) is a Phosphoserine. Disordered stretches follow at residues 378-399 (RAGP…LPAP), 442-481 (PATE…HLLL), and 501-550 (QSLR…KRES). The PPxY motif signature appears at 472–475 (PPPY). The segment covering 507 to 530 (TEQDRSDKSHKGAKGDKAGRDKKQ) has biased composition (basic and acidic residues). Ser534 bears the Phosphoserine mark. Over residues 541–550 (NSRDEEKRES) the composition is skewed to basic and acidic residues. In terms of domain architecture, Protein kinase spans 626–931 (FVKIKTLGIG…ADDLKAHPFF (306 aa)). Residues 632–640 (LGIGAFGEV) and Lys655 each bind ATP. Asp749 serves as the catalytic Proton acceptor. Residues 932–1010 (NTIDFSRDIR…RRFFDDNGYP (79 aa)) form the AGC-kinase C-terminal domain. Thr999 carries the phosphothreonine modification. A disordered region spans residues 1014 to 1042 (PKPSEPAESADPGDADLEGAAEGCQPVYV).

Belongs to the protein kinase superfamily. AGC Ser/Thr protein kinase family. As to quaternary structure, interacts with and is phosphorylated by AURKA. Binds to AR. Interacts with AJUBA during mitosis and this complex regulates organization of the spindle apparatus through recruitment of gamma-tubulin to the centrosome. Interacts (via PPxY motif) with YAP1 (via WW domains). Interacts with MOB1A and MOB1B. Interacts with LIMD1, WTIP and AJUBA. Interacts with SNAI1. Interacts with WWC1, WWC2 and WWC3 (via their WW domains). Interacts (via UBA domain) with ubiquitinated AMOTL2; the interaction promotes LATS2 phosphorylation of YAP1. Mg(2+) is required as a cofactor. Post-translationally, autophosphorylated and phosphorylated during M-phase and the G1/S-phase of the cell cycle. Phosphorylated and activated by STK3/MST2. Phosphorylated by MAP4Ks; in parallel to STK3/MST2 and resulting to its activation. Phosphorylation by NUAK2 may regulate its activity in phosphorylation and inactivation YAP1. In terms of tissue distribution, expressed at high levels in ovary and testis and at lower levels in all other tissues examined.

The protein resides in the cytoplasm. Its subcellular location is the cytoskeleton. It is found in the microtubule organizing center. It localises to the centrosome. The protein localises to the spindle pole. The protein resides in the nucleus. It catalyses the reaction L-seryl-[protein] + ATP = O-phospho-L-seryl-[protein] + ADP + H(+). The catalysed reaction is L-threonyl-[protein] + ATP = O-phospho-L-threonyl-[protein] + ADP + H(+). Its function is as follows. Negative regulator of YAP1 in the Hippo signaling pathway that plays a pivotal role in organ size control and tumor suppression by restricting proliferation and promoting apoptosis. The core of this pathway is composed of a kinase cascade wherein STK3/MST2 and STK4/MST1, in complex with its regulatory protein SAV1, phosphorylates and activates LATS1/2 in complex with its regulatory protein MOB1, which in turn phosphorylates and inactivates YAP1 oncoprotein and WWTR1/TAZ. Phosphorylation of YAP1 by LATS2 inhibits its translocation into the nucleus to regulate cellular genes important for cell proliferation, cell death, and cell migration. Also phosphorylates YAP1 in response to cell contact inhibition-driven WWP1 ubiquitination of AMOTL2, which results in LATS2 activation. Acts as a tumor suppressor which plays a critical role in centrosome duplication, maintenance of mitotic fidelity and genomic stability. Negatively regulates G1/S transition by down-regulating cyclin E/CDK2 kinase activity. Negative regulator of the androgen receptor. Phosphorylates SNAI1 in the nucleus leading to its nuclear retention and stabilization, which enhances its epithelial-mesenchymal transition and tumor cell invasion/migration activities. This tumor-promoting activity is independent of its effects upon YAP1 or WWTR1/TAZ. Acts as an activator of the NLRP3 inflammasome by mediating phosphorylation of 'Ser-265' of NLRP3 following NLRP3 palmitoylation, promoting NLRP3 activation by NEK7. This Mus musculus (Mouse) protein is Serine/threonine-protein kinase LATS2.